A 223-amino-acid polypeptide reads, in one-letter code: Adenylate kinase 4, mitochondrial (223 aa).

15-20 (GSGKGT) provides a ligand contact to a ribonucleoside 5'-triphosphate. The segment at 35-64 (SSGHFLRENIKANTEVGEMAKQYIEKSLLV) is NMP. AMP contacts are provided by Ser-36 and Arg-41. Lys-60 carries the post-translational modification N6-succinyllysine. AMP-binding positions include 62 to 64 (LLV), 89 to 92 (GFPR), and Gln-96. Positions 125-162 (RRWIHPPSGRVYNLDFNPPHVHGIDDVTGEPLVQQEDD) are LID. A ribonucleoside 5'-triphosphate contacts are provided by residues Arg-126 and 135–136 (VY). Arg-170 contacts AMP. Lys-175 carries the post-translational modification N6-acetyllysine. An N6-acetyllysine; alternate mark is found at Lys-179 and Lys-186. N6-succinyllysine; alternate is present on residues Lys-179 and Lys-186. Thr-199 is a binding site for a ribonucleoside 5'-triphosphate.

The protein belongs to the adenylate kinase family. AK3 subfamily. As to quaternary structure, monomer. Interacts with SLC25A5/ANT2.

Its subcellular location is the mitochondrion matrix. It carries out the reaction a ribonucleoside 5'-phosphate + ATP = a ribonucleoside 5'-diphosphate + ADP. The catalysed reaction is AMP + ATP = 2 ADP. It catalyses the reaction GTP + AMP = GDP + ADP. The enzyme catalyses CMP + ATP = CDP + ADP. It carries out the reaction GTP + CMP = CDP + GDP. The catalysed reaction is dAMP + ATP = dADP + ADP. It catalyses the reaction dCMP + ATP = dCDP + ADP. The enzyme catalyses a 2'-deoxyribonucleoside 5'-diphosphate + ATP = a 2'-deoxyribonucleoside 5'-triphosphate + ADP. It carries out the reaction a ribonucleoside 5'-diphosphate + ATP = a ribonucleoside 5'-triphosphate + ADP. The catalysed reaction is GDP + ATP = GTP + ADP. It catalyses the reaction CDP + GTP = CTP + GDP. The enzyme catalyses CDP + ATP = CTP + ADP. It carries out the reaction UDP + ATP = UTP + ADP. The catalysed reaction is GTP + UDP = UTP + GDP. It catalyses the reaction dADP + GTP = dATP + GDP. The enzyme catalyses dCDP + GTP = dCTP + GDP. It carries out the reaction dCDP + ATP = dCTP + ADP. The catalysed reaction is dGDP + ATP = dGTP + ADP. It catalyses the reaction dTDP + GTP = dTTP + GDP. The enzyme catalyses dTDP + ATP = dTTP + ADP. In terms of biological role, broad-specificity mitochondrial nucleoside phosphate kinase involved in cellular nucleotide homeostasis by catalyzing nucleoside-phosphate interconversions. Similar to other adenylate kinases, preferentially catalyzes the phosphorylation of the nucleoside monophosphate AMP with ATP as phosphate donor to produce ADP. Phosphorylates only AMP when using GTP as phosphate donor. In vitro, can also catalyze the phosphorylation of CMP, dAMP and dCMP and use GTP as an alternate phosphate donor. Moreover, exhibits a diphosphate kinase activity, producing ATP, CTP, GTP, UTP, TTP, dATP, dCTP and dGTP from the corresponding diphosphate substrates with either ATP or GTP as phosphate donors. Plays a role in controlling cellular ATP levels by regulating phosphorylation and activation of the energy sensor protein kinase AMPK. Plays a protective role in the cellular response to oxidative stress. The sequence is that of Adenylate kinase 4, mitochondrial from Pongo abelii (Sumatran orangutan).